Consider the following 494-residue polypeptide: Sugar phosphate exchanger 3 (494 aa).

Residues 16 to 36 (FSHHHVVVFLLTFFSYSLLHA) traverse the membrane as a helical segment. The N-linked (GlcNAc...) asparagine glycan is linked to asparagine 58. A run of 5 helical transmembrane segments spans residues 81-101 (TLFL…GLFI), 113-133 (WVLS…GALT), 147-167 (LWIV…AVMG), 177-197 (VVFG…ACLA), and 209-229 (FLVT…GLLV). Asparagine 266 carries N-linked (GlcNAc...) asparagine glycosylation. Transmembrane regions (helical) follow at residues 297–317 (LAYA…PFYL), 333–353 (IWYD…SDVL), 357–377 (APVL…YSRS), 386–406 (LLMT…SSAI), 428–448 (GIVD…VSLI), and 452–472 (LGWM…IVFI).

This sequence belongs to the major facilitator superfamily. Organophosphate:Pi antiporter (OPA) (TC 2.A.1.4) family. As to quaternary structure, interacts with ATRAID; the interaction is direct and both proteins are mutually dependent for their stability. Glycosylated. As to expression, expressed in liver, kidney, intestine and pancreas.

The protein localises to the endoplasmic reticulum membrane. Its subcellular location is the lysosome membrane. Unlike the other SLC37 members, lacks glucose-6-phosphate antiporter activity. In osteoclasts, forms a transporter complex with ATRAID for nitrogen-containing-bisphophonates (N-BPs) required for releasing N-BP molecules that have trafficked to lysosomes through fluid-phase endocytosis into the cytosol. The sequence is that of Sugar phosphate exchanger 3 from Homo sapiens (Human).